A 452-amino-acid polypeptide reads, in one-letter code: Pup--protein ligase (452 aa).

A Mg(2+)-binding site is contributed by Glu9. An ATP-binding site is contributed by Arg53. Tyr55 provides a ligand contact to Mg(2+). The Proton acceptor role is filled by Asp57. Glu63 is a binding site for Mg(2+). Residues Thr66 and Trp419 each contribute to the ATP site.

The protein belongs to the Pup ligase/Pup deamidase family. Pup-conjugating enzyme subfamily. Post-translationally, pupylated at an undetermined lysine residue by the prokaryotic ubiquitin-like protein Pup, which leads to its degradation by the proteasome and thereby constitutes a negative auto-regulation.

The catalysed reaction is ATP + [prokaryotic ubiquitin-like protein]-L-glutamate + [protein]-L-lysine = ADP + phosphate + N(6)-([prokaryotic ubiquitin-like protein]-gamma-L-glutamyl)-[protein]-L-lysine.. The protein operates within protein degradation; proteasomal Pup-dependent pathway. Its pathway is protein modification; protein pupylation. Functionally, catalyzes the covalent attachment of the prokaryotic ubiquitin-like protein modifier Pup to the proteasomal substrate proteins, thereby targeting them for proteasomal degradation. This tagging system is termed pupylation. The ligation reaction likely involves the side-chain carboxylate of the C-terminal glutamate of Pup and the side-chain amino group of a substrate lysine. The polypeptide is Pup--protein ligase (pafA) (Mycolicibacterium smegmatis (strain ATCC 700084 / mc(2)155) (Mycobacterium smegmatis)).